We begin with the raw amino-acid sequence, 185 residues long: Ribosome-recycling factor (185 aa).

Belongs to the RRF family.

The protein resides in the cytoplasm. Responsible for the release of ribosomes from messenger RNA at the termination of protein biosynthesis. May increase the efficiency of translation by recycling ribosomes from one round of translation to another. The sequence is that of Ribosome-recycling factor from Streptococcus thermophilus (strain CNRZ 1066).